The sequence spans 78 residues: Major outer membrane lipoprotein Lpp (78 aa).

An N-terminal signal peptide occupies residues 1–20 (MNRTKLVLGAVILGSTLLAG). Cys21 carries N-palmitoyl cysteine lipidation. A lipid anchor (S-diacylglycerol cysteine) is attached at Cys21. Residues 22–75 (SSNAKIDQLSTDVQTLNAKVDQLSNDVTAIRSDVQAAKDDAARANQRLDNQAHS) adopt a coiled-coil conformation. 2 repeats span residues 24–34 (NAKIDQLSTDV) and 38–48 (NAKVDQLSNDV). Residue Lys78 is modified to N6-murein peptidoglycan lysine.

It belongs to the Lpp family. As to quaternary structure, homotrimer.

The protein localises to the cell outer membrane. It localises to the secreted. Its subcellular location is the cell wall. Functionally, a highly abundant outer membrane lipoprotein that controls the distance between the inner and outer membranes. The only protein known to be covalently linked to the peptidoglycan network (PGN). Also non-covalently binds the PGN. The link between the cell outer membrane and PGN contributes to maintenance of the structural and functional integrity of the cell envelope, and maintains the correct distance between the PGN and the outer membrane. The chain is Major outer membrane lipoprotein Lpp from Erwinia amylovora (Fire blight bacteria).